A 252-amino-acid chain; its full sequence is Probable transcriptional regulatory protein Kole_1935 (252 aa).

Belongs to the TACO1 family.

The protein localises to the cytoplasm. The protein is Probable transcriptional regulatory protein Kole_1935 of Kosmotoga olearia (strain ATCC BAA-1733 / DSM 21960 / TBF 19.5.1).